We begin with the raw amino-acid sequence, 173 residues long: MNSKGSQNVATTCKPVTTFVQTDTNTFREIVQRLTGPTENNAAAATPEATVIKTAIQKRPTSKLHERRQCMRPKLEIVKPPLSFKPTGTTPSSKSGNTNLLTSPVGTPSSLFSNLSLIEGEPDSCTTNIEEEEKAIKERRFYLHPSPRSKPGYTEPELLTLFPLTSPNSSGKP.

The VQ signature appears at Phe27–Gly36. Thr46 is subject to Phosphothreonine. 2 disordered regions span residues Glu76–Val105 and Leu143–Pro173. The span at Pro86–Val105 shows a compositional bias: polar residues. Residues Ser92, Ser103, Ser146, and Ser149 each carry the phosphoserine modification. Over residues Thr154 to Thr165 the composition is skewed to low complexity. A Phosphothreonine modification is found at Thr165. Phosphoserine occurs at positions 166 and 170.

Post-translationally, phosphorylated on serine and threonine residues by MPK6.

Its subcellular location is the nucleus. May modulate WRKY transcription factor activities. This is VQ motif-containing protein 31 from Arabidopsis thaliana (Mouse-ear cress).